The sequence spans 269 residues: [LysW]-aminoadipate kinase (269 aa).

5-8 (KVGG) provides a ligand contact to ATP. R64 contacts substrate. ATP is bound at residue Y78. N168 contacts substrate.

It belongs to the acetylglutamate kinase family. LysZ subfamily.

It is found in the cytoplasm. It carries out the reaction [amino-group carrier protein]-C-terminal-N-(1,4-dicarboxybutan-1-yl)-L-glutamine + ATP = [amino-group carrier protein]-C-terminal-N-(1-carboxy-5-phosphooxy-5-oxopentan-1-yl)-L-glutamine + ADP. The protein operates within amino-acid biosynthesis; L-lysine biosynthesis via AAA pathway; L-lysine from L-alpha-aminoadipate (Thermus route): step 2/5. Catalyzes the phosphorylation of LysW-gamma-alpha-aminoadipate. Does not phosphorylate N-acetyl-glutamate. This is [LysW]-aminoadipate kinase from Thermus thermophilus (strain ATCC BAA-163 / DSM 7039 / HB27).